A 403-amino-acid polypeptide reads, in one-letter code: Phosphopentomutase (403 aa).

Positions 13, 298, 303, 339, 340, and 351 each coordinate Mn(2+).

The protein belongs to the phosphopentomutase family. Mn(2+) serves as cofactor.

It is found in the cytoplasm. The catalysed reaction is 2-deoxy-alpha-D-ribose 1-phosphate = 2-deoxy-D-ribose 5-phosphate. It carries out the reaction alpha-D-ribose 1-phosphate = D-ribose 5-phosphate. Its pathway is carbohydrate degradation; 2-deoxy-D-ribose 1-phosphate degradation; D-glyceraldehyde 3-phosphate and acetaldehyde from 2-deoxy-alpha-D-ribose 1-phosphate: step 1/2. Its function is as follows. Isomerase that catalyzes the conversion of deoxy-ribose 1-phosphate (dRib-1-P) and ribose 1-phosphate (Rib-1-P) to deoxy-ribose 5-phosphate (dRib-5-P) and ribose 5-phosphate (Rib-5-P), respectively. This is Phosphopentomutase from Streptococcus equi subsp. zooepidemicus (strain MGCS10565).